We begin with the raw amino-acid sequence, 109 residues long: Protein ripply2 (109 aa).

Residues 1–15 (MENITFTSGLNSEMD) show a composition bias toward polar residues. 2 disordered regions span residues 1–42 (MENI…RPAD) and 88–109 (YEDPDTEDEEDYSDEEDEKELR). The WRPW motif motif lies at 20 to 23 (WRPW). Residues 30–42 (KAPDYKPYKRPAD) show a composition bias toward basic and acidic residues. The segment at 53-88 (HPVKLFWPKSQCFDYLYEDAEVLLRNYPVQATICLY) is ripply homology domain. Residues 89–109 (EDPDTEDEEDYSDEEDEKELR) are compositionally biased toward acidic residues.

Belongs to the ripply family. As to expression, first expressed in the paraxial mesoderm at the 90% epiboly stage, and subsequently confined to the presomitic mesoderm. Expressed in the rostral compartment of S-I and S-II.

Its subcellular location is the nucleus. Functionally, plays a role in somitogenesis. Required for somite segregation and establishment of rostrocaudal polarity in somites. This chain is Protein ripply2, found in Danio rerio (Zebrafish).